Reading from the N-terminus, the 478-residue chain is Aspartyl/glutamyl-tRNA(Asn/Gln) amidotransferase subunit B (478 aa).

It belongs to the GatB/GatE family. GatB subfamily. In terms of assembly, heterotrimer of A, B and C subunits.

The catalysed reaction is L-glutamyl-tRNA(Gln) + L-glutamine + ATP + H2O = L-glutaminyl-tRNA(Gln) + L-glutamate + ADP + phosphate + H(+). It catalyses the reaction L-aspartyl-tRNA(Asn) + L-glutamine + ATP + H2O = L-asparaginyl-tRNA(Asn) + L-glutamate + ADP + phosphate + 2 H(+). Its function is as follows. Allows the formation of correctly charged Asn-tRNA(Asn) or Gln-tRNA(Gln) through the transamidation of misacylated Asp-tRNA(Asn) or Glu-tRNA(Gln) in organisms which lack either or both of asparaginyl-tRNA or glutaminyl-tRNA synthetases. The reaction takes place in the presence of glutamine and ATP through an activated phospho-Asp-tRNA(Asn) or phospho-Glu-tRNA(Gln). The chain is Aspartyl/glutamyl-tRNA(Asn/Gln) amidotransferase subunit B from Lachnoclostridium phytofermentans (strain ATCC 700394 / DSM 18823 / ISDg) (Clostridium phytofermentans).